A 648-amino-acid chain; its full sequence is TBC1 domain family member 17 (648 aa).

The tract at residues 218-309 (DPYSTTFSSF…PELKNRIFSG (92 aa)) is required for interaction with OPTN. The interval 240–259 (PQPEGAASDLPPPPDDEPEP) is disordered. One can recognise a Rab-GAP TBC domain in the interval 310 to 520 (GLSPSLRREA…RLWEVLWTGL (211 aa)). The tract at residues 594-648 (LAPPAEPHSPSPTASPLPLSPTRAPPTPPPSTDTAPQPDSSLEILPEEEDEGADS) is disordered. A compositionally biased stretch (pro residues) spans 597–624 (PAEPHSPSPTASPLPLSPTRAPPTPPPS). Phosphoserine is present on residues serine 602 and serine 604. Threonine 606 carries the phosphothreonine modification. Serine 608 bears the Phosphoserine mark. The residue at position 615 (threonine 615) is a Phosphothreonine. A compositionally biased stretch (low complexity) spans 625 to 634 (TDTAPQPDSS). The span at 638–648 (LPEEEDEGADS) shows a compositional bias: acidic residues.

In terms of assembly, interacts with OPTN; this interaction mediates TBC1D17 transient association with Rab8.

It localises to the cytoplasmic vesicle. Its subcellular location is the autophagosome. It is found in the cytoplasm. The protein localises to the recycling endosome. Probable RAB GTPase-activating protein that inhibits RAB8A/B function. Reduces Rab8 recruitment to tubules emanating from the endocytic recycling compartment (ERC) and inhibits Rab8-mediated endocytic trafficking, such as that of transferrin receptor (TfR). Involved in regulation of autophagy. This is TBC1 domain family member 17 from Homo sapiens (Human).